A 216-amino-acid chain; its full sequence is Ras-related protein RABE1d (216 aa).

22–29 (GDSGVGKS) serves as a coordination point for GTP. Positions 44 to 52 (FITTIGIDF) match the Effector region motif. Residues 70–74 (DTAGQ), 128–131 (NKAD), and 159–160 (SA) each bind GTP. Residues 196 to 216 (TKQDTAASSSTAEKSACCSYV) form a disordered region. Positions 200 to 216 (TAASSSTAEKSACCSYV) are enriched in low complexity. Residues Cys212 and Cys213 are each lipidated (S-geranylgeranyl cysteine).

It belongs to the small GTPase superfamily. Rab family. As to quaternary structure, interacts with PI5K2.

It localises to the golgi apparatus membrane. The protein resides in the cell membrane. Involved in membrane trafficking from the Golgi to the plasma membrane. The sequence is that of Ras-related protein RABE1d (RABE1D) from Arabidopsis thaliana (Mouse-ear cress).